The primary structure comprises 282 residues: Pantothenate synthetase (282 aa).

30 to 37 (MGNLHDGH) is an ATP binding site. His37 (proton donor) is an active-site residue. Gln61 lines the (R)-pantoate pocket. Residue Gln61 participates in beta-alanine binding. 149–152 (GNKD) lines the ATP pocket. Gln155 is a binding site for (R)-pantoate. ATP-binding positions include Ala178 and 186-189 (MSSR).

This sequence belongs to the pantothenate synthetase family. In terms of assembly, homodimer.

The protein resides in the cytoplasm. It catalyses the reaction (R)-pantoate + beta-alanine + ATP = (R)-pantothenate + AMP + diphosphate + H(+). It functions in the pathway cofactor biosynthesis; (R)-pantothenate biosynthesis; (R)-pantothenate from (R)-pantoate and beta-alanine: step 1/1. Catalyzes the condensation of pantoate with beta-alanine in an ATP-dependent reaction via a pantoyl-adenylate intermediate. The sequence is that of Pantothenate synthetase from Marinomonas sp. (strain MWYL1).